The following is a 158-amino-acid chain: Pathogenesis-related protein 1 (158 aa).

This sequence belongs to the BetVI family.

The protein localises to the cytoplasm. This Asparagus officinalis (Garden asparagus) protein is Pathogenesis-related protein 1 (PR1).